We begin with the raw amino-acid sequence, 600 residues long: NADH-quinone oxidoreductase subunit C/D (600 aa).

An NADH dehydrogenase I subunit C region spans residues 1-190 (MIDLMPKKNT…EPFFLNEQKE (190 aa)). Residues 214-600 (EFMFLNLGPN…IDFVMSDVDR (387 aa)) are NADH dehydrogenase I subunit D.

This sequence in the N-terminal section; belongs to the complex I 30 kDa subunit family. The protein in the C-terminal section; belongs to the complex I 49 kDa subunit family. NDH-1 is composed of 13 different subunits. Subunits NuoB, CD, E, F, and G constitute the peripheral sector of the complex.

The protein localises to the cell membrane. The catalysed reaction is a quinone + NADH + 5 H(+)(in) = a quinol + NAD(+) + 4 H(+)(out). Functionally, NDH-1 shuttles electrons from NADH, via FMN and iron-sulfur (Fe-S) centers, to quinones in the respiratory chain. The immediate electron acceptor for the enzyme in this species is believed to be ubiquinone. Couples the redox reaction to proton translocation (for every two electrons transferred, four hydrogen ions are translocated across the cytoplasmic membrane), and thus conserves the redox energy in a proton gradient. In Buchnera aphidicola subsp. Acyrthosiphon pisum (strain Tuc7), this protein is NADH-quinone oxidoreductase subunit C/D.